An 810-amino-acid chain; its full sequence is Leucine--tRNA ligase (810 aa).

A 'HIGH' region motif is present at residues Pro43–His53. The short motif at Lys578 to Ser582 is the 'KMSKS' region element. Lys581 contacts ATP.

It belongs to the class-I aminoacyl-tRNA synthetase family.

The protein localises to the cytoplasm. The enzyme catalyses tRNA(Leu) + L-leucine + ATP = L-leucyl-tRNA(Leu) + AMP + diphosphate. The polypeptide is Leucine--tRNA ligase (Solibacter usitatus (strain Ellin6076)).